Here is a 407-residue protein sequence, read N- to C-terminus: tRNA (guanine(9)-N1)-methyltransferase (407 aa).

Positions 1-19 (MDLDPAHKPSQAEETKEQG) are enriched in basic and acidic residues. Disordered stretches follow at residues 1–105 (MDLD…VRKR) and 220–256 (ENMI…PRPE). The span at 20 to 32 (NEQGQVEQNQAQQ) shows a compositional bias: low complexity. Over residues 91–103 (LKRKDSRIARKVR) the composition is skewed to basic residues. An SAM-dependent MTase TRM10-type domain is found at 120 to 356 (ANKQKPPSVN…SVIPKRKGGK (237 aa)). Residues 263–264 (LS), glycine 283, 287–291 (DKNRE), cysteine 295, leucine 309, and 321–323 (TVL) each bind S-adenosyl-L-methionine. Aspartate 287 acts as the Proton acceptor in catalysis. A disordered region spans residues 353 to 407 (KGGKLKEQQGASGETQETEEAEAEDPEEENEETKDPDAEASASKQNTPKVEVTSK). The span at 368 to 386 (QETEEAEAEDPEEENEETK) shows a compositional bias: acidic residues. The span at 394 to 407 (ASKQNTPKVEVTSK) shows a compositional bias: polar residues.

This sequence belongs to the class IV-like SAM-binding methyltransferase superfamily. TRM10 family. In terms of assembly, monomer.

It is found in the cytoplasm. The protein localises to the nucleus. It carries out the reaction guanosine(9) in tRNA + S-adenosyl-L-methionine = N(1)-methylguanosine(9) in tRNA + S-adenosyl-L-homocysteine + H(+). S-adenosyl-L-methionine-dependent guanine N(1)-methyltransferase that catalyzes the formation of N(1)-methylguanine at position 9 (m1G9) in cytoplasmic tRNA. This Gibberella zeae (strain ATCC MYA-4620 / CBS 123657 / FGSC 9075 / NRRL 31084 / PH-1) (Wheat head blight fungus) protein is tRNA (guanine(9)-N1)-methyltransferase.